Consider the following 152-residue polypeptide: Putative NrdI-like protein (152 aa).

This sequence belongs to the NrdI family.

This is Putative NrdI-like protein from Streptococcus pyogenes serotype M18 (strain MGAS8232).